We begin with the raw amino-acid sequence, 176 residues long: Cystatin-related protein 2 (176 aa).

The N-terminal stretch at 1–26 (MYKTLCGTQLLLAIFVLFLNFSHATA) is a signal peptide. A propeptide spanning residues 27–30 (KGTR) is cleaved from the precursor. Asn-71 carries an N-linked (GlcNAc...) asparagine glycan. 2 disulfides stabilise this stretch: Cys-129/Cys-139 and Cys-153/Cys-173.

This sequence belongs to the cystatin family. As to expression, prostate.

The sequence is that of Cystatin-related protein 2 (Crp2) from Rattus norvegicus (Rat).